The following is a 521-amino-acid chain: Matrix metalloproteinase-A (521 aa).

The N-terminal stretch at 1-21 (MFTGLHDILIILFLLVTLKIA) is a signal peptide. Residues 22 to 95 (QNVDHTKFLQ…EDHQKSRGKR (74 aa)) constitute a propeptide, activation peptide. The short motif at 78-85 (PRCGHPDV) is the Cysteine switch element. Zn(2+) is bound at residue cysteine 80. At 96–500 (YAPPQFKWKE…FCPRNEKLVL (405 aa)) the chain is on the extracellular side. A glycan (N-linked (GlcNAc...) asparagine) is linked at asparagine 199. Histidine 215 lines the Zn(2+) pocket. Residue glutamate 216 is part of the active site. The Zn(2+) site is built by histidine 219 and histidine 225. Residues 259-298 (KASKKENEEEERKTENEDKRRKTEKDRGRTREHESDDIRP) are disordered. The span at 261 to 298 (SKKENEEEERKTENEDKRRKTEKDRGRTREHESDDIRP) shows a compositional bias: basic and acidic residues. 3 Hemopexin repeats span residues 300–347 (ECRV…FPGL), 391–443 (EKYV…WARV), and 444–492 (PKGV…FGFC). The N-linked (GlcNAc...) asparagine glycan is linked to asparagine 469. The helical transmembrane segment at 501 to 521 (NSSSSHFSLIYATITILILIF) threads the bilayer.

It belongs to the peptidase M10A family. It depends on Zn(2+) as a cofactor. As to expression, expressed in the anchor cell. Expressed in the anchor cell throughout the L3 and the early L4 stage, but not in vulva precursor cells P6.p, P6.px, or P6.pxx. Expression in P6.pxxx cells begins in late-L4 stage. During L4 lethargus, expressed in all four vulE cells, but not in vulF cells. The expression in vulE cells persists in adulthood. In males, expressed in the linker cell (LC) from the early L4 stage until LC death during the L4-to-adult molt.

It localises to the cell membrane. It is found in the basolateral cell membrane. In terms of biological role, metalloprotease which, together with cadherin cdh-3 and hemicentin him-4, plays a role in anchor cell (AC) invasion during postembryonic vulval development probably by promoting the degradation of the basement membrane separating the gonad from the vulva epithelium. The chain is Matrix metalloproteinase-A from Caenorhabditis elegans.